A 219-amino-acid chain; its full sequence is 7-cyano-7-deazaguanine synthase (219 aa).

Residue 10 to 20 (FSGGQDSTTCL) coordinates ATP. Residues Cys188, Cys197, Cys200, and Cys203 each coordinate Zn(2+).

The protein belongs to the QueC family. Homodimer. Zn(2+) is required as a cofactor.

It carries out the reaction 7-carboxy-7-deazaguanine + NH4(+) + ATP = 7-cyano-7-deazaguanine + ADP + phosphate + H2O + H(+). Its pathway is purine metabolism; 7-cyano-7-deazaguanine biosynthesis. Catalyzes the ATP-dependent conversion of 7-carboxy-7-deazaguanine (CDG) to 7-cyano-7-deazaguanine (preQ(0)). The polypeptide is 7-cyano-7-deazaguanine synthase (Clostridium botulinum (strain Langeland / NCTC 10281 / Type F)).